Here is a 173-residue protein sequence, read N- to C-terminus: Macro domain-containing protein in gbd 3'region (173 aa).

The Macro domain occupies methionine 1–serine 173.

Belongs to the MacroD-type family.

The polypeptide is Macro domain-containing protein in gbd 3'region (Cupriavidus necator (Alcaligenes eutrophus)).